Here is a 223-residue protein sequence, read N- to C-terminus: Sigma non-opioid intracellular receptor 1 (223 aa).

The Lumenal portion of the chain corresponds to 1 to 9; the sequence is MCWAVGRRW. The segment at 2–8 is targeting to endoplasmic reticulum-associated lipid droplets; sequence CWAVGRR. The helical transmembrane segment at 10–30 threads the bilayer; it reads AWAALLLAVAAVLAQVVWLWL. Residues 31-223 are Cytoplasmic-facing; it reads GTQSFVFQHE…LTTYLFGQDA (193 aa). The segment at 99 to 106 is important for ligand-binding; sequence SLSEYVLL. A C-terminal hydrophobic region region spans residues 177–223; that stretch reads VIPSTLGFALADTVFSTQDFLTLFYTLRAYARGLRLELTTYLFGQDA.

The protein belongs to the ERG2 family. As to quaternary structure, homotrimer. Forms a ternary complex with ANK2 and ITPR3. The complex is disrupted by agonists. Interacts with KCNA4. Interacts with KCNA2; cocaine consumption leads to increased interaction. Interacts with RNF112 in an oxidative stress-regulated manner.

It localises to the nucleus inner membrane. The protein resides in the nucleus outer membrane. It is found in the nucleus envelope. The protein localises to the cytoplasmic vesicle. Its subcellular location is the endoplasmic reticulum membrane. It localises to the membrane. The protein resides in the lipid droplet. It is found in the cell junction. The protein localises to the cell membrane. Its subcellular location is the cell projection. It localises to the growth cone. The protein resides in the postsynaptic density membrane. Its function is as follows. Functions in lipid transport from the endoplasmic reticulum and is involved in a wide array of cellular functions probably through regulation of the biogenesis of lipid microdomains at the plasma membrane. Involved in the regulation of different receptors it plays a role in BDNF signaling and EGF signaling. Also regulates ion channels like the potassium channel and could modulate neurotransmitter release. Plays a role in calcium signaling through modulation together with ANK2 of the ITP3R-dependent calcium efflux at the endoplasmic reticulum. Plays a role in several other cell functions including proliferation, survival and death. Originally identified for its ability to bind various psychoactive drugs it is involved in learning processes, memory and mood alteration. Necessary for proper mitochondrial axonal transport in motor neurons, in particular the retrograde movement of mitochondria. Plays a role in protecting cells against oxidative stress-induced cell death via its interaction with RNF112. The chain is Sigma non-opioid intracellular receptor 1 (SIGMAR1) from Bos taurus (Bovine).